The sequence spans 204 residues: DNA polymerase epsilon subunit D (204 aa).

Positions 165 to 177 are enriched in basic and acidic residues; that stretch reads KEVQRRRAEKTPA. A disordered region spans residues 165-204; the sequence is KEVQRRRAEKTPAADEGQAEEGDAADEEEGSHKRAKLDEH. Residues 181–193 show a composition bias toward acidic residues; that stretch reads GQAEEGDAADEEE. The segment covering 194-204 has biased composition (basic and acidic residues); that stretch reads GSHKRAKLDEH.

Heterotetramer. Consists of four subunits: POL2, DPB2, DPB3 and DPB4.

It localises to the nucleus. In terms of biological role, as accessory component of the DNA polymerase epsilon (DNA polymerase II) participates in chromosomal DNA replication. In Eremothecium gossypii (strain ATCC 10895 / CBS 109.51 / FGSC 9923 / NRRL Y-1056) (Yeast), this protein is DNA polymerase epsilon subunit D (DPB4).